A 258-amino-acid polypeptide reads, in one-letter code: Ribosomal RNA small subunit methyltransferase A (258 aa).

Residues His13, Leu15, Gly40, Glu62, Asp87, and Asn108 each coordinate S-adenosyl-L-methionine.

The protein belongs to the class I-like SAM-binding methyltransferase superfamily. rRNA adenine N(6)-methyltransferase family. RsmA subfamily.

The protein localises to the cytoplasm. It catalyses the reaction adenosine(1518)/adenosine(1519) in 16S rRNA + 4 S-adenosyl-L-methionine = N(6)-dimethyladenosine(1518)/N(6)-dimethyladenosine(1519) in 16S rRNA + 4 S-adenosyl-L-homocysteine + 4 H(+). Specifically dimethylates two adjacent adenosines (A1518 and A1519) in the loop of a conserved hairpin near the 3'-end of 16S rRNA in the 30S particle. May play a critical role in biogenesis of 30S subunits. This Sulfurihydrogenibium sp. (strain YO3AOP1) protein is Ribosomal RNA small subunit methyltransferase A.